Consider the following 785-residue polypeptide: Endonuclease MutS2 (785 aa).

Residue 334-341 (GPNTGGKT) participates in ATP binding. Residues 710-785 (LDLRGQRYDE…GNGATIVKLK (76 aa)) enclose the Smr domain.

The protein belongs to the DNA mismatch repair MutS family. MutS2 subfamily. Homodimer. Binds to stalled ribosomes, contacting rRNA.

Endonuclease that is involved in the suppression of homologous recombination and thus may have a key role in the control of bacterial genetic diversity. Its function is as follows. Acts as a ribosome collision sensor, splitting the ribosome into its 2 subunits. Detects stalled/collided 70S ribosomes which it binds and splits by an ATP-hydrolysis driven conformational change. Acts upstream of the ribosome quality control system (RQC), a ribosome-associated complex that mediates the extraction of incompletely synthesized nascent chains from stalled ribosomes and their subsequent degradation. Probably generates substrates for RQC. This is Endonuclease MutS2 from Lactobacillus helveticus (strain DPC 4571).